We begin with the raw amino-acid sequence, 281 residues long: RNA polymerase sigma factor RpoH (281 aa).

Residues 52–121 (LILSHLRFVI…IHEYVLRNWR (70 aa)) form a sigma-70 factor domain-2 region. Positions 76-79 (DLIQ) match the Interaction with polymerase core subunit RpoC motif. Residues 226–277 (ALQSLDARSQDIIKARWLDDNKATLHDLAAKYNVSAERIRQLETNALKKLKS) form a sigma-70 factor domain-4 region. The segment at residues 250–269 (LHDLAAKYNVSAERIRQLET) is a DNA-binding region (H-T-H motif).

This sequence belongs to the sigma-70 factor family. RpoH subfamily. Interacts with the RNA polymerase core enzyme.

Its subcellular location is the cytoplasm. Functionally, sigma factors are initiation factors that promote the attachment of RNA polymerase to specific initiation sites and are then released. This sigma factor is involved in regulation of expression of heat shock genes. The polypeptide is RNA polymerase sigma factor RpoH (Haemophilus influenzae (strain ATCC 51907 / DSM 11121 / KW20 / Rd)).